The following is a 321-amino-acid chain: Glucan 1,3-beta-glucosidase (321 aa).

Residues 1–21 form the signal peptide; sequence MQFLSSFVFAALALLPLSAMA. Residues Asn-39 and Asn-99 are each glycosylated (N-linked (GlcNAc...) asparagine). Catalysis depends on Glu-141, which acts as the Proton donor. Asn-210, Asn-213, and Asn-237 each carry an N-linked (GlcNAc...) asparagine glycan. Glu-244 serves as the catalytic Nucleophile. N-linked (GlcNAc...) asparagine glycosylation is found at Asn-309 and Asn-317.

Belongs to the glycosyl hydrolase 17 family.

It localises to the secreted. The protein resides in the cell wall. It catalyses the reaction Successive hydrolysis of beta-D-glucose units from the non-reducing ends of (1-&gt;3)-beta-D-glucans, releasing alpha-glucose.. Glucanases possibly play a role in cell expansion during growth, in cell-cell fusion during mating, and in spore release during sporulation. This enzyme may be involved in beta-glucan degradation and also function biosynthetically as a transglycosylase. The polypeptide is Glucan 1,3-beta-glucosidase (bgl2) (Schizosaccharomyces pombe (strain 972 / ATCC 24843) (Fission yeast)).